The following is a 150-amino-acid chain: Small ribosomal subunit protein eS19 (150 aa).

The protein belongs to the eukaryotic ribosomal protein eS19 family. As to quaternary structure, part of the 30S ribosomal subunit.

Its function is as follows. May be involved in maturation of the 30S ribosomal subunit. The chain is Small ribosomal subunit protein eS19 from Thermoplasma volcanium (strain ATCC 51530 / DSM 4299 / JCM 9571 / NBRC 15438 / GSS1).